Reading from the N-terminus, the 450-residue chain is UDP-N-acetylmuramoylalanine--D-glutamate ligase (450 aa).

119–125 (GSNGKTT) contributes to the ATP binding site.

It belongs to the MurCDEF family.

It localises to the cytoplasm. It catalyses the reaction UDP-N-acetyl-alpha-D-muramoyl-L-alanine + D-glutamate + ATP = UDP-N-acetyl-alpha-D-muramoyl-L-alanyl-D-glutamate + ADP + phosphate + H(+). It participates in cell wall biogenesis; peptidoglycan biosynthesis. Functionally, cell wall formation. Catalyzes the addition of glutamate to the nucleotide precursor UDP-N-acetylmuramoyl-L-alanine (UMA). In Streptococcus pneumoniae (strain CGSP14), this protein is UDP-N-acetylmuramoylalanine--D-glutamate ligase.